Here is a 624-residue protein sequence, read N- to C-terminus: Dihydroxy-acid dehydratase (624 aa).

D81 contacts Mg(2+). [2Fe-2S] cluster is bound at residue C122. Residues D123 and K124 each contribute to the Mg(2+) site. N6-carboxylysine is present on K124. Position 195 (C195) interacts with [2Fe-2S] cluster. Position 499 (E499) interacts with Mg(2+). S525 serves as the catalytic Proton acceptor.

Belongs to the IlvD/Edd family. In terms of assembly, homodimer. It depends on [2Fe-2S] cluster as a cofactor. The cofactor is Mg(2+).

It catalyses the reaction (2R)-2,3-dihydroxy-3-methylbutanoate = 3-methyl-2-oxobutanoate + H2O. The catalysed reaction is (2R,3R)-2,3-dihydroxy-3-methylpentanoate = (S)-3-methyl-2-oxopentanoate + H2O. It participates in amino-acid biosynthesis; L-isoleucine biosynthesis; L-isoleucine from 2-oxobutanoate: step 3/4. It functions in the pathway amino-acid biosynthesis; L-valine biosynthesis; L-valine from pyruvate: step 3/4. Functions in the biosynthesis of branched-chain amino acids. Catalyzes the dehydration of (2R,3R)-2,3-dihydroxy-3-methylpentanoate (2,3-dihydroxy-3-methylvalerate) into 2-oxo-3-methylpentanoate (2-oxo-3-methylvalerate) and of (2R)-2,3-dihydroxy-3-methylbutanoate (2,3-dihydroxyisovalerate) into 2-oxo-3-methylbutanoate (2-oxoisovalerate), the penultimate precursor to L-isoleucine and L-valine, respectively. This chain is Dihydroxy-acid dehydratase, found in Shewanella baltica (strain OS155 / ATCC BAA-1091).